A 515-amino-acid chain; its full sequence is 1-pyrroline-5-carboxylate dehydrogenase (515 aa).

Catalysis depends on residues Glu286 and Cys320.

The protein belongs to the aldehyde dehydrogenase family. RocA subfamily.

The catalysed reaction is L-glutamate 5-semialdehyde + NAD(+) + H2O = L-glutamate + NADH + 2 H(+). It participates in amino-acid degradation; L-proline degradation into L-glutamate; L-glutamate from L-proline: step 2/2. The polypeptide is 1-pyrroline-5-carboxylate dehydrogenase (Geobacillus kaustophilus (strain HTA426)).